The following is a 195-amino-acid chain: Molybdenum cofactor guanylyltransferase (195 aa).

GTP-binding positions include 12-14, Lys25, Asn53, Asp70, and Asp100; that span reads LAG. Asp100 serves as a coordination point for Mg(2+).

The protein belongs to the MobA family. Monomer. Mg(2+) is required as a cofactor.

It localises to the cytoplasm. It catalyses the reaction Mo-molybdopterin + GTP + H(+) = Mo-molybdopterin guanine dinucleotide + diphosphate. Its function is as follows. Transfers a GMP moiety from GTP to Mo-molybdopterin (Mo-MPT) cofactor (Moco or molybdenum cofactor) to form Mo-molybdopterin guanine dinucleotide (Mo-MGD) cofactor. The sequence is that of Molybdenum cofactor guanylyltransferase from Vibrio parahaemolyticus serotype O3:K6 (strain RIMD 2210633).